Reading from the N-terminus, the 365-residue chain is Class I histocompatibility antigen, Gogo-A*0101 alpha chain (365 aa).

An N-terminal signal peptide occupies residues Met1–Ala24. The alpha-1 stretch occupies residues Gly25–Asp114. Residues Gly25–Ile308 lie on the Extracellular side of the membrane. Asn110 carries N-linked (GlcNAc...) asparagine glycosylation. The interval Gly115–Thr206 is alpha-2. 2 disulfide bridges follow: Cys125/Cys188 and Cys227/Cys283. An alpha-3 region spans residues Asp207 to Trp298. One can recognise an Ig-like C1-type domain in the interval Pro209 to Arg297. Residues Glu299–Ile308 are connecting peptide. A helical membrane pass occupies residues Val309–Trp332. At Arg333–Val365 the chain is on the cytoplasmic side. The segment at Asp338 to Val365 is disordered. Residues Gly342 to Ser359 are compositionally biased toward low complexity. Position 343 is a phosphoserine (Ser343). Phosphotyrosine is present on Tyr344. Ser345, Ser349, Ser350, Ser352, Ser356, and Ser359 each carry phosphoserine.

The protein belongs to the MHC class I family. Heterodimer of an alpha chain and a beta chain (beta-2-microglobulin).

Its subcellular location is the membrane. Functionally, involved in the presentation of foreign antigens to the immune system. The chain is Class I histocompatibility antigen, Gogo-A*0101 alpha chain from Gorilla gorilla gorilla (Western lowland gorilla).